A 5289-amino-acid polypeptide reads, in one-letter code: Mucin-2 (5289 aa).

The signal sequence occupies residues 1-20 (MGLPLARLAAVCLALSLAGG). At Ser-21 the chain carries Phosphoserine. His-34 contacts Cu(2+). The VWFD 1 domain maps to 35-207 (NVCSTWGNFH…KINQPDVVCE (173 aa)). Cystine bridges form between Cys-37–Cys-169, Cys-59–Cys-206, Cys-67–Cys-166, Cys-218–Cys-255, Cys-225–Cys-250, Cys-237–Cys-275, Cys-257–Cys-263, Cys-265–Cys-291, Cys-295–Cys-329, Cys-308–Cys-321, Cys-312–Cys-351, Cys-331–Cys-345, Cys-353–Cys-375, Cys-370–Cys-387, Cys-373–Cys-382, Cys-391–Cys-528, Cys-413–Cys-563, Cys-435–Cys-443, Cys-574–Cys-619, Cys-588–Cys-614, Cys-601–Cys-639, Cys-621–Cys-627, Cys-629–Cys-654, Cys-661–Cys-698, Cys-674–Cys-688, Cys-678–Cys-718, Cys-700–Cys-712, Cys-720–Cys-742, and Cys-740–Cys-749. Residue Asp-49 participates in Ca(2+) binding. Cu(+) is bound by residues Met-146 and Met-154. Glu-156 contributes to the Cu(2+) binding site. An N-linked (GlcNAc...) asparagine glycan is attached at Asn-163. Residues Asp-171, Asn-173, Leu-175, and Glu-180 each contribute to the Ca(2+) site. His-277 lines the Cu(2+) pocket. Residues 295 to 351 (CPGNLVYLESGSPCMDTCSHLEVSSLCEEHRMDGCFCPEGTVYDDIGDSGCVPVSQC) form the TIL domain. A Cu(2+)-binding site is contributed by His-324. Met-326 contributes to the Cu(+) binding site. In terms of domain architecture, VWFD 2 spans 389–564 (GTCALEGGSH…NTWKAQSSCH (176 aa)). Residue Asp-403 participates in Ca(2+) binding. N-linked (GlcNAc...) asparagine glycosylation occurs at Asn-423. Residues Asn-530, Asn-532, Leu-534, Asp-537, and Asp-538 each contribute to the Ca(2+) site. N-linked (GlcNAc...) asparagine glycosylation occurs at Asn-670. Asn-770 carries N-linked (GlcNAc...) asparagine glycosylation. 21 disulfide bridges follow: Cys-784/Cys-820, Cys-802/Cys-814, Cys-822/Cys-844, Cys-839/Cys-856, Cys-842/Cys-851, Cys-860/Cys-992, Cys-882/Cys-1027, Cys-891/Cys-989, Cys-909/Cys-916, Cys-1037/Cys-1080, Cys-1051/Cys-1075, Cys-1062/Cys-1102, Cys-1082/Cys-1090, Cys-1092/Cys-1117, Cys-1108/Cys-1137, Cys-1121/Cys-1163, Cys-1145/Cys-1187, Cys-1167/Cys-1181, Cys-1189/Cys-1213, Cys-1208/Cys-1238, and Cys-1211/Cys-1221. Positions 858-1028 (GTCSIYGSGH…NSWKEAPTCP (171 aa)) constitute a VWFD 3 domain. A Ca(2+)-binding site is contributed by Asp-872. Asn-894 is a glycosylation site (N-linked (GlcNAc...) asparagine). Residues Asn-994, Asp-996, Arg-998, Asn-1001, and Asp-1002 each contribute to the Ca(2+) site. 2 N-linked (GlcNAc...) asparagine glycosylation sites follow: Asn-1139 and Asn-1154. Residues Asn-1215, Asn-1230, and Asn-1246 are each glycosylated (N-linked (GlcNAc...) asparagine). 10 O-linked (GalNAc) threonine glycosylation sites follow: Thr-1266, Thr-1267, Thr-1269, Thr-1270, Thr-1272, Thr-1275, Thr-1276, Thr-1281, Thr-1282, and Thr-1287. O-linked (GalNAc) serine glycosylation is found at Ser-1291 and Ser-1292. Residue Thr-1293 is glycosylated (O-linked (GalNAc) threonine). The O-linked (GalNAc) serine glycan is linked to Ser-1296. The O-linked (GalNAc) threonine glycan is linked to Thr-1297. Residues Asn-1310, Asp-1312, His-1313, Ser-1316, Asp-1319, Gly-1321, Asp-1322, Glu-1324, Asp-1381, and Tyr-1382 each coordinate Ca(2+). 5 stretches are compositionally biased toward pro residues: residues 1399–1411 (PSPP…PPPT), 1419–1510 (TTTP…PITP), 1520–1549 (TTTP…PITP), 1559–1628 (TTTP…PITP), and 1638–1679 (TTTP…PPTT). The tract at residues 1399-1773 (PSPPTTTPSP…SITPPTFSPF (375 aa)) is disordered. A run of 6 repeats spans residues 1401–1416 (PPTT…TTTL), 1417–1432 (PPTT…TTTP), 1433–1448 (PPTT…TTTP), 1449–1464 (PPTT…TTTP), 1465–1471 (PPTTTPS), and 1472–1478 (PPTTTPS). The interval 1401–1747 (PPTTTPSPPP…SPPTTTMTTL (347 aa)) is approximate repeats. One copy of the 7A repeat lies at 1479-1494 (PPTTTPSPPTTTTTTP). The stretch at 1495 to 1517 (PPTTTPSPPTTTPITPPASTTTL) is one 7B repeat. Residues 1518–1533 (PPTTTPSPPTTTTTTP) form an 8A repeat. Residues 1534–1556 (PPTTTPSPPTTTPITPPTSTTTL) form an 8B repeat. One copy of the 9A repeat lies at 1557 to 1572 (PPTTTPSPPPTTTTTP). One copy of the 9B repeat lies at 1573-1596 (PPTTTPSPPTTTTPSPPTITTTTP). A 10A repeat occupies 1597–1612 (PPTTTPSPPTTTTTTP). A 10B repeat occupies 1613-1635 (PPTTTPSPPTTTPITPPTSTTTL). Residues 1636–1651 (PPTTTPSPPPTTTTTP) form an 11A repeat. Residues 1652-1675 (PPTTTPSPPTTTTPSPPITTTTTP) form an 11B repeat. 5 repeat units span residues 1676–1683 (PPTTTPSS), 1684–1699 (PITT…MTTP), 1700–1715 (SPTT…TTTP), 1716–1731 (SSTT…MTTP), and 1732–1747 (SPTT…MTTL). Composition is skewed to low complexity over residues 1680–1720 (TPSS…STTT) and 1741–1759 (TTTM…LTTT). Over residues 1760 to 1770 (PLPPSITPPTF) the composition is skewed to pro residues. Asn-1787 and Asn-1820 each carry an N-linked (GlcNAc...) asparagine glycan. Low complexity-rich tracts occupy residues 1885–2158 (MTTT…TMVT), 2165–4238 (GTQT…QTPT), 4269–4315 (TTVT…STAP), and 4329–4430 (STPQ…PSII). Disordered stretches follow at residues 1885-4238 (MTTT…QTPT) and 4269-4430 (TTVT…PSII). Residues Asn-4449, Asn-4461, Asn-4472, and Asn-4483 are each glycosylated (N-linked (GlcNAc...) asparagine). The interval 4492 to 4524 (PTPTPSKSTPTPSKPSSTPSKPTPGTKPPECPD) is disordered. A compositionally biased stretch (low complexity) spans 4496–4511 (PSKSTPTPSKPSSTPS). The span at 4512–4522 (KPTPGTKPPEC) shows a compositional bias: pro residues. Residues Asn-4532, Asn-4548, and Asn-4612 are each glycosylated (N-linked (GlcNAc...) asparagine). One can recognise a VWFD 4 domain in the interval 4589–4772 (CYCTGWGDPH…VNDPSKPHCP (184 aa)). 3 disulfides stabilise this stretch: Cys-4591–Cys-4732, Cys-4613–Cys-4771, and Cys-4637–Cys-4645. Asn-4726 and Asn-4737 each carry an N-linked (GlcNAc...) asparagine glycan. The interval 4770 to 4795 (HCPHSSSTTKRPAVTVPGGGKTTPHK) is disordered. N-linked (GlcNAc...) asparagine glycans are attached at residues Asn-4862, Asn-4897, Asn-4991, Asn-4998, Asn-5065, Asn-5080, Asn-5129, Asn-5148, and Asn-5179. Residues 4927–4996 (CVGPDNVPRE…DTCCNITVCK (70 aa)) form the VWFC 1 domain. In terms of domain architecture, VWFC 2 spans 5034 to 5101 (GVCVHGNAEY…APGECCKKCE (68 aa)). 4 disulfides stabilise this stretch: Cys-5185–Cys-5232, Cys-5199–Cys-5246, Cys-5208–Cys-5262, and Cys-5212–Cys-5264. One can recognise a CTCK domain in the interval 5185-5270 (CSTVPVTTEV…SCQCQDTVCG (86 aa)).

In terms of assembly, homomultimer; disulfide-linked. The N- and C-terminus mediate their assembly into higher order structures to form filaments. The CTCK domains of two polypeptides associate in the endoplasmic reticulum to generate intermolecularly disulfide-bonded dimers. These dimers progress to the Golgi apparatus, which is a more acidic environment than the endoplasmic reticulum. Under acidic conditions, the N-termini form non-covalent intermolecular interactions that juxtapose assemblies of the third VWD domain (VWD3) from different CTCK-linked dimers. The VWD3 assemblies then become disulfide bonded to one another to produce long, disulfide-linked polymers that remain highly compact until secretion. Interacts with FCGBP. Interacts with AGR2; disulfide-linked. As to quaternary structure, (Microbial infection) Interacts in vitro with L.monocytogenes internalin proteins InlB, InlC and InlJ; for InlC binding is slightly better at pH 5.5, (the pH of the intestine) than at pH 7.4. Post-translationally, O-glycosylated. O-glycosylation is required for mucin assembly. Goblet cells synthesize two forms of mucin that differ in branched chain O-glycosylation and the site of production in the colon. May undergo proteolytic cleavage in the outer mucus layer of the colon, contributing to the expanded volume and loose nature of this layer which allows for bacterial colonization in contrast to the inner mucus layer which is dense and devoid of bacteria. In terms of processing, at low pH of 6 and under, undergoes autocatalytic cleavage in vitro in the N-terminal region of the fourth VWD domain. It is likely that this also occurs in vivo and is triggered by the low pH of the late secretory pathway. In terms of tissue distribution, colon, small intestine, colonic tumors, bronchus, cervix and gall bladder.

The protein resides in the secreted. Coats the epithelia of the intestines and other mucus membrane-containing organs to provide a protective, lubricating barrier against particles and infectious agents at mucosal surfaces. Major constituent of the colon mucus, which is mainly formed by large polymeric networks of MUC2 secreted by goblet cells that cover the exposed surfaces of intestine. MUC2 networks form hydrogels that guard the underlying epithelium from pathogens and other hazardous matter entering from the outside world, while permitting nutrient absorption and gas exchange. Acts as a divalent copper chaperone that protects intestinal cells from copper toxicity and facilitates nutritional copper unptake into cells. Binds both Cu(2+) and its reduced form, Cu(1+), at two juxtaposed binding sites: Cu(2+), once reduced to Cu(1+) by vitamin C (ascorbate) or other dietary antioxidants, transits to the other binding site. MUC2-bound Cu(1+) is protected from oxidation in aerobic environments, and can be released for nutritional delivery to cells. Mucin gels store antimicrobial molecules that participate in innate immunity. Mucin glycoproteins also house and feed the microbiome, lubricate tissue surfaces, and may facilitate the removal of contaminants and waste products from the body. Goblet cells synthesize two forms of MUC2 mucin that differ in branched chain O-glycosylation and the site of production in the colon: a (1) 'thick' mucus that wraps the microbiota to form fecal pellets is produced in the proximal, ascending colon. 'Thick' mucus transits along the descending colon and is lubricated by a (2) 'thin' MUC2 mucus produced in the distal colon which adheres to the 'thick' mucus. This chain is Mucin-2, found in Homo sapiens (Human).